The sequence spans 291 residues: 4-hydroxy-tetrahydrodipicolinate synthase (291 aa).

T45 contacts pyruvate. Residue Y133 is the Proton donor/acceptor of the active site. K161 serves as the catalytic Schiff-base intermediate with substrate. Residue I203 coordinates pyruvate.

Belongs to the DapA family. In terms of assembly, homotetramer; dimer of dimers.

It is found in the cytoplasm. It carries out the reaction L-aspartate 4-semialdehyde + pyruvate = (2S,4S)-4-hydroxy-2,3,4,5-tetrahydrodipicolinate + H2O + H(+). It participates in amino-acid biosynthesis; L-lysine biosynthesis via DAP pathway; (S)-tetrahydrodipicolinate from L-aspartate: step 3/4. Catalyzes the condensation of (S)-aspartate-beta-semialdehyde [(S)-ASA] and pyruvate to 4-hydroxy-tetrahydrodipicolinate (HTPA). The chain is 4-hydroxy-tetrahydrodipicolinate synthase from Acidithiobacillus ferrooxidans (strain ATCC 23270 / DSM 14882 / CIP 104768 / NCIMB 8455) (Ferrobacillus ferrooxidans (strain ATCC 23270)).